A 506-amino-acid chain; its full sequence is AMP phosphorylase (506 aa).

AMP-binding positions include Gly-167, 193–198, and Thr-202; that span reads SRAITG. Asp-255 (proton donor) is an active-site residue. Residues Ser-263 and Lys-287 each coordinate AMP.

It belongs to the thymidine/pyrimidine-nucleoside phosphorylase family. Type 2 subfamily.

It catalyses the reaction AMP + phosphate = alpha-D-ribose 1,5-bisphosphate + adenine. The enzyme catalyses CMP + phosphate = cytosine + alpha-D-ribose 1,5-bisphosphate. The catalysed reaction is UMP + phosphate = alpha-D-ribose 1,5-bisphosphate + uracil. In terms of biological role, catalyzes the conversion of AMP and phosphate to adenine and ribose 1,5-bisphosphate (R15P). Exhibits phosphorylase activity toward CMP and UMP in addition to AMP. Functions in an archaeal AMP degradation pathway, together with R15P isomerase and RubisCO. This chain is AMP phosphorylase, found in Methanosarcina acetivorans (strain ATCC 35395 / DSM 2834 / JCM 12185 / C2A).